The chain runs to 105 residues: Large ribosomal subunit protein uL24 (105 aa).

It belongs to the universal ribosomal protein uL24 family. In terms of assembly, part of the 50S ribosomal subunit.

One of two assembly initiator proteins, it binds directly to the 5'-end of the 23S rRNA, where it nucleates assembly of the 50S subunit. Its function is as follows. One of the proteins that surrounds the polypeptide exit tunnel on the outside of the subunit. The sequence is that of Large ribosomal subunit protein uL24 from Nitrosospira multiformis (strain ATCC 25196 / NCIMB 11849 / C 71).